The sequence spans 412 residues: Multifunctional CCA protein (412 aa).

The ATP site is built by Gly8 and Arg11. Residues Gly8 and Arg11 each contribute to the CTP site. Positions 21 and 23 each coordinate Mg(2+). 3 residues coordinate ATP: Arg91, Arg137, and Arg140. Residues Arg91, Arg137, and Arg140 each coordinate CTP. The 102-residue stretch at 228 to 329 folds into the HD domain; sequence CGIHTLMSLQ…WRLLQRLDVL (102 aa).

It belongs to the tRNA nucleotidyltransferase/poly(A) polymerase family. Bacterial CCA-adding enzyme type 1 subfamily. Monomer. Can also form homodimers and oligomers. Mg(2+) is required as a cofactor. Requires Ni(2+) as cofactor.

It catalyses the reaction a tRNA precursor + 2 CTP + ATP = a tRNA with a 3' CCA end + 3 diphosphate. The catalysed reaction is a tRNA with a 3' CCA end + 2 CTP + ATP = a tRNA with a 3' CCACCA end + 3 diphosphate. In terms of biological role, catalyzes the addition and repair of the essential 3'-terminal CCA sequence in tRNAs without using a nucleic acid template. Adds these three nucleotides in the order of C, C, and A to the tRNA nucleotide-73, using CTP and ATP as substrates and producing inorganic pyrophosphate. tRNA 3'-terminal CCA addition is required both for tRNA processing and repair. Also involved in tRNA surveillance by mediating tandem CCA addition to generate a CCACCA at the 3' terminus of unstable tRNAs. While stable tRNAs receive only 3'-terminal CCA, unstable tRNAs are marked with CCACCA and rapidly degraded. The polypeptide is Multifunctional CCA protein (Acinetobacter baumannii (strain SDF)).